The primary structure comprises 617 residues: Proline--tRNA ligase (617 aa).

Belongs to the class-II aminoacyl-tRNA synthetase family. ProS type 1 subfamily. In terms of assembly, homodimer.

The protein resides in the cytoplasm. It carries out the reaction tRNA(Pro) + L-proline + ATP = L-prolyl-tRNA(Pro) + AMP + diphosphate. Catalyzes the attachment of proline to tRNA(Pro) in a two-step reaction: proline is first activated by ATP to form Pro-AMP and then transferred to the acceptor end of tRNA(Pro). As ProRS can inadvertently accommodate and process non-cognate amino acids such as alanine and cysteine, to avoid such errors it has two additional distinct editing activities against alanine. One activity is designated as 'pretransfer' editing and involves the tRNA(Pro)-independent hydrolysis of activated Ala-AMP. The other activity is designated 'posttransfer' editing and involves deacylation of mischarged Ala-tRNA(Pro). The misacylated Cys-tRNA(Pro) is not edited by ProRS. This is Proline--tRNA ligase from Treponema pallidum (strain Nichols).